The chain runs to 431 residues: Enolase (431 aa).

Glutamine 167 provides a ligand contact to (2R)-2-phosphoglycerate. Glutamate 209 functions as the Proton donor in the catalytic mechanism. Positions 246, 290, and 317 each coordinate Mg(2+). The (2R)-2-phosphoglycerate site is built by lysine 342, arginine 371, serine 372, and lysine 393. Catalysis depends on lysine 342, which acts as the Proton acceptor.

The protein belongs to the enolase family. Component of the RNA degradosome, a multiprotein complex involved in RNA processing and mRNA degradation. Mg(2+) serves as cofactor.

The protein resides in the cytoplasm. It localises to the secreted. The protein localises to the cell surface. It catalyses the reaction (2R)-2-phosphoglycerate = phosphoenolpyruvate + H2O. The protein operates within carbohydrate degradation; glycolysis; pyruvate from D-glyceraldehyde 3-phosphate: step 4/5. Catalyzes the reversible conversion of 2-phosphoglycerate (2-PG) into phosphoenolpyruvate (PEP). It is essential for the degradation of carbohydrates via glycolysis. This chain is Enolase, found in Yersinia pestis bv. Antiqua (strain Antiqua).